A 156-amino-acid polypeptide reads, in one-letter code: Transthyretin-like protein 1 (156 aa).

A signal peptide spans 1–17 (MKIALSFLFLTSTFSNA). Asn151 carries N-linked (GlcNAc...) asparagine glycosylation.

Belongs to the nematode transthyretin-like family.

The protein resides in the secreted. The sequence is that of Transthyretin-like protein 1 (ttr-1) from Caenorhabditis elegans.